Consider the following 287-residue polypeptide: Inositol diphosphatase siw14 (287 aa).

The 172-residue stretch at 85–256 folds into the Tyrosine-protein phosphatase domain; it reads NFGVVYPGII…LNDLKRYISD (172 aa). Ser-156 and Ser-159 each carry phosphoserine. Cys-189 functions as the Phosphocysteine intermediate in the catalytic mechanism.

The protein belongs to the protein-tyrosine phosphatase family. Atypical dual-specificity phosphatase Siw14-like subfamily.

The protein resides in the cytoplasm. Its subcellular location is the nucleus. The catalysed reaction is 5-diphospho-1D-myo-inositol 1,2,3,4,6-pentakisphosphate + H2O = 1D-myo-inositol hexakisphosphate + phosphate + H(+). It catalyses the reaction 1-diphospho-1D-myo-inositol 2,3,4,5,6-pentakisphosphate + H2O = 1D-myo-inositol hexakisphosphate + phosphate + H(+). The enzyme catalyses 1,5-bis(diphospho)-1D-myo-inositol 2,3,4,6-tetrakisphosphate + H2O = 1-diphospho-1D-myo-inositol 2,3,4,5,6-pentakisphosphate + phosphate + 2 H(+). Its activity is regulated as follows. Activity is inhibited by the reaction product inorganic phosphate and by sulfate (a phosphate mimetic). Not inhibited by magnesium. Functionally, cleaves the beta-phosphate at the 1- and 5-position of soluble inositol pyrophosphates. Has exopolyphosphatase activity in vitro but does not appear to contribute to the homeostasis of cellular polyphosphate. The sequence is that of Inositol diphosphatase siw14 from Schizosaccharomyces pombe (strain 972 / ATCC 24843) (Fission yeast).